Reading from the N-terminus, the 490-residue chain is GTPase Der (490 aa).

EngA-type G domains are found at residues 3–166 and 203–376; these read PVVA…MDDV and IKLA…DSST. GTP contacts are provided by residues 9–16, 56–60, 118–121, 209–216, 256–260, and 321–324; these read GRPNVGKS, DTGGI, NKTD, DTAGV, and NKWD. A KH-like domain is found at 377–461; it reads RRVSTAMLTR…PIRIQFKEGE (85 aa).

It belongs to the TRAFAC class TrmE-Era-EngA-EngB-Septin-like GTPase superfamily. EngA (Der) GTPase family. As to quaternary structure, associates with the 50S ribosomal subunit.

Its function is as follows. GTPase that plays an essential role in the late steps of ribosome biogenesis. In Salmonella enteritidis PT4 (strain P125109), this protein is GTPase Der.